The following is a 221-amino-acid chain: N-(5'-phosphoribosyl)anthranilate isomerase (221 aa).

This sequence belongs to the TrpF family.

The enzyme catalyses N-(5-phospho-beta-D-ribosyl)anthranilate = 1-(2-carboxyphenylamino)-1-deoxy-D-ribulose 5-phosphate. It functions in the pathway amino-acid biosynthesis; L-tryptophan biosynthesis; L-tryptophan from chorismate: step 3/5. In Parabacteroides distasonis (strain ATCC 8503 / DSM 20701 / CIP 104284 / JCM 5825 / NCTC 11152), this protein is N-(5'-phosphoribosyl)anthranilate isomerase.